Here is an 87-residue protein sequence, read N- to C-terminus: Small ribosomal subunit protein uS17 (87 aa).

It belongs to the universal ribosomal protein uS17 family. In terms of assembly, part of the 30S ribosomal subunit.

Its function is as follows. One of the primary rRNA binding proteins, it binds specifically to the 5'-end of 16S ribosomal RNA. The protein is Small ribosomal subunit protein uS17 of Hydrogenovibrio crunogenus (strain DSM 25203 / XCL-2) (Thiomicrospira crunogena).